A 104-amino-acid polypeptide reads, in one-letter code: ATP-dependent Clp protease adapter protein ClpS (104 aa).

Belongs to the ClpS family. As to quaternary structure, binds to the N-terminal domain of the chaperone ClpA.

Its function is as follows. Involved in the modulation of the specificity of the ClpAP-mediated ATP-dependent protein degradation. This Desulforapulum autotrophicum (strain ATCC 43914 / DSM 3382 / VKM B-1955 / HRM2) (Desulfobacterium autotrophicum) protein is ATP-dependent Clp protease adapter protein ClpS.